We begin with the raw amino-acid sequence, 445 residues long: tRNA modification GTPase MnmE (445 aa).

(6S)-5-formyl-5,6,7,8-tetrahydrofolate is bound by residues Arg-20, Glu-79, and Lys-119. One can recognise a TrmE-type G domain in the interval 215–371; that stretch reads GLKLAIIGPP…ILKNIENIAE (157 aa). Asn-225 is a binding site for K(+). GTP-binding positions include 225-230, 244-250, and 269-272; these read NAGKSS, SNIAGTT, and DTAG. Position 229 (Ser-229) interacts with Mg(2+). Residues Ser-244, Ile-246, and Thr-249 each coordinate K(+). Thr-250 provides a ligand contact to Mg(2+). Position 445 (Lys-445) interacts with (6S)-5-formyl-5,6,7,8-tetrahydrofolate.

This sequence belongs to the TRAFAC class TrmE-Era-EngA-EngB-Septin-like GTPase superfamily. TrmE GTPase family. In terms of assembly, homodimer. Heterotetramer of two MnmE and two MnmG subunits. K(+) is required as a cofactor.

Its subcellular location is the cytoplasm. Its function is as follows. Exhibits a very high intrinsic GTPase hydrolysis rate. Involved in the addition of a carboxymethylaminomethyl (cmnm) group at the wobble position (U34) of certain tRNAs, forming tRNA-cmnm(5)s(2)U34. In Rickettsia canadensis (strain McKiel), this protein is tRNA modification GTPase MnmE.